The sequence spans 503 residues: ATP synthase subunit alpha, chloroplastic (503 aa).

Residue 170-177 (GDRQTGKT) coordinates ATP.

The protein belongs to the ATPase alpha/beta chains family. F-type ATPases have 2 components, CF(1) - the catalytic core - and CF(0) - the membrane proton channel. CF(1) has five subunits: alpha(3), beta(3), gamma(1), delta(1), epsilon(1). CF(0) has four main subunits: a, b, b' and c.

It localises to the plastid. The protein localises to the chloroplast thylakoid membrane. The catalysed reaction is ATP + H2O + 4 H(+)(in) = ADP + phosphate + 5 H(+)(out). In terms of biological role, produces ATP from ADP in the presence of a proton gradient across the membrane. The alpha chain is a regulatory subunit. This is ATP synthase subunit alpha, chloroplastic from Trieres chinensis (Marine centric diatom).